Here is a 269-residue protein sequence, read N- to C-terminus: 4-hydroxy-tetrahydrodipicolinate reductase (269 aa).

NAD(+) is bound by residues 10–15 (GANGRM), E36, 99–101 (GTT), and 123–126 (AANF). The active-site Proton donor/acceptor is H156. Position 157 (H157) interacts with (S)-2,3,4,5-tetrahydrodipicolinate. K160 acts as the Proton donor in catalysis. Residue 166-167 (GT) coordinates (S)-2,3,4,5-tetrahydrodipicolinate.

The protein belongs to the DapB family.

Its subcellular location is the cytoplasm. It catalyses the reaction (S)-2,3,4,5-tetrahydrodipicolinate + NAD(+) + H2O = (2S,4S)-4-hydroxy-2,3,4,5-tetrahydrodipicolinate + NADH + H(+). The catalysed reaction is (S)-2,3,4,5-tetrahydrodipicolinate + NADP(+) + H2O = (2S,4S)-4-hydroxy-2,3,4,5-tetrahydrodipicolinate + NADPH + H(+). Its pathway is amino-acid biosynthesis; L-lysine biosynthesis via DAP pathway; (S)-tetrahydrodipicolinate from L-aspartate: step 4/4. In terms of biological role, catalyzes the conversion of 4-hydroxy-tetrahydrodipicolinate (HTPA) to tetrahydrodipicolinate. This Neisseria meningitidis serogroup C (strain 053442) protein is 4-hydroxy-tetrahydrodipicolinate reductase.